Here is a 273-residue protein sequence, read N- to C-terminus: Large ribosomal subunit protein uL2 (273 aa).

A disordered region spans residues 221 to 262 (RGTAMNPVDHPHGGGEGRNFGKHPVTPWGVQTKGKKTRHNKR). Residues 253-262 (KGKKTRHNKR) are compositionally biased toward basic residues.

This sequence belongs to the universal ribosomal protein uL2 family. In terms of assembly, part of the 50S ribosomal subunit. Forms a bridge to the 30S subunit in the 70S ribosome.

One of the primary rRNA binding proteins. Required for association of the 30S and 50S subunits to form the 70S ribosome, for tRNA binding and peptide bond formation. It has been suggested to have peptidyltransferase activity; this is somewhat controversial. Makes several contacts with the 16S rRNA in the 70S ribosome. The sequence is that of Large ribosomal subunit protein uL2 from Aggregatibacter actinomycetemcomitans (Actinobacillus actinomycetemcomitans).